Reading from the N-terminus, the 303-residue chain is Sporulation regulatory protein (303 aa).

Residues 26-213 (TGRLRAGLRK…HRVNDKQTAE (188 aa)) enclose the FtsK domain. ATP is bound at residue 43 to 50 (GANHSGKS).

In terms of biological role, involved in sporulation inhibition and pock formation. The polypeptide is Sporulation regulatory protein (spi) (Streptomyces azureus).